The chain runs to 278 residues: Envelope glycoprotein L (278 aa).

A signal peptide spans 1-30 (MCRRPDCGFSFSPGPVVLLWCCLLLPIVSS). The 214-residue stretch at 43–256 (VPAECPELTR…DKYYAGLPPE (214 aa)) folds into the gL betaherpesvirus-type domain. Cysteines 154 and 159 form a disulfide.

The protein belongs to the herpesviridae glycoprotein L (gL) family. Betaherpesvirinae gL subfamily. As to quaternary structure, interacts with glycoprotein H (gH); this interaction is necessary for the correct processing and cell surface expression of gH. Forms the envelope pentamer complex (PC) composed of gH, gL, UL128, UL130, and UL131A. The pentamer interacts with host NRP2. Forms the envelope trimer complex composed of gH, gL, and gO. The trimer interacts with host PDGFRA. The trimer also interacts with host EPHA2.

It localises to the virion membrane. It is found in the host cell membrane. The protein resides in the host Golgi apparatus. Its subcellular location is the host trans-Golgi network. The heterodimer glycoprotein H-glycoprotein L is required for the fusion of viral and plasma membranes leading to virus entry into the host cell. Acts as a functional inhibitor of gH and maintains gH in an inhibited form. Upon binding to host integrins, gL dissociates from gH leading to activation of the viral fusion glycoproteins gB and gH. In human cytomegalovirus, forms two distincts complexes to mediate viral entry, a trimer and a pentamer at the surface of the virion envelope. The gH-gL-gO trimer is required for infection in fibroblasts by interacting with host PDGFRA, and in glioblastoma cells by interacting with host EPHA2. The gH-gL-UL128-UL130-UL131A pentamer is essential for viral entry in epithelial, endothelial and myeloid cells via interaction with host NRP2. This is Envelope glycoprotein L from Homo sapiens (Human).